Here is a 575-residue protein sequence, read N- to C-terminus: UvrABC system protein C (575 aa).

In terms of domain architecture, GIY-YIG spans 16–94; sequence SQPGVYRMYD…IKLYQPRYNV (79 aa). The UVR domain occupies 204–239; that stretch reads DQVLTQLISRMETASQNLEFEEAARIRDQIQAVRRV.

The protein belongs to the UvrC family. As to quaternary structure, interacts with UvrB in an incision complex.

It localises to the cytoplasm. Its function is as follows. The UvrABC repair system catalyzes the recognition and processing of DNA lesions. UvrC both incises the 5' and 3' sides of the lesion. The N-terminal half is responsible for the 3' incision and the C-terminal half is responsible for the 5' incision. In Shigella dysenteriae serotype 1 (strain Sd197), this protein is UvrABC system protein C.